Reading from the N-terminus, the 662-residue chain is MHLNTSICEVDNPDLTEEREKGTFDTDKMAAVIYGSEKLARRRREISEAVSKIPELADTQPFPFMDRLEKITEGSRKLEVLNNNIRDIIDYDDNGERLHIYQEVTGMEGHPLALHEVMFIPALVSQASKEQQEKWLGRARRREIIGCYAQTEMGHGTNLRKLETTATYFPDTQEFVLNTPTTTALKWWPGALGKSSNYAVVVVDMIIKGKSYGPHPFMVQLRDEKTHIPLKGIVVGDIGPKMSFNGGDNGFLGFDKFRVPRTNLLMRHVRVEADGTYVKPPHAKVNHSAMVHVRSHMATGQGALLAQALIIAVRYSAVRRQGFLENKTQEVKVLDYQTQQHRLFPSLARAYAFIFTGFETIHLYSQLLKDVDMGNTSGMADLHALTSGLKSVVTHQTGEGIEQARMACGGHGYSMASYISEIYGIAIGGCTYEGENMVMLLQLARYLVKSVELIKSGEAKKLGPMVSYLAAKGGHPDLSSLNGYVTAFEHMARRQAWKATEKFLKLMESGESREIAWNKSTVELTRASRLHTRLFIIEAFMRRVSRIEDIPVKEVLTDLLHLHVNYELLDVATYALEFMSSTQLDYIRDQLYLYLEKIRPSAVSLVDSFQISDMQLRSVLGRRDGNVYENLFKWAKSSPLNKSDVLPSVDKYLMPMMEKAKL.

FAD is bound by residues 148-151 (YAQT), 156-157 (GT), and G190. Residues 284–287 (KVNH) and R294 contribute to the substrate site. Residues R319 and 339–342 (QQHR) contribute to the FAD site. Positions 341, 391, 395, and 403 each coordinate ATP. G410 contributes to the FAD binding site. 432–433 (YE) contributes to the substrate binding site. E433 functions as the Proton acceptor in the catalytic mechanism. Position 435 (E435) interacts with FAD. Residues 526–529 (RASR) and Y574 each bind ATP. Positions 660–662 (AKL) match the Microbody targeting signal motif.

Belongs to the acyl-CoA oxidase family. As to quaternary structure, homodimer. The cofactor is FAD.

The protein localises to the peroxisome. It carries out the reaction asc-C9-CoA + O2 = asc-DeltaC9-CoA + H2O2. Its pathway is lipid metabolism; peroxisomal fatty acid beta-oxidation. Its activity is regulated as follows. Activated by ATP. ATP binding leads to a conformational change that promotes FAD cofactor binding and enzyme activity. ATP binding likely occurs during acox-1.4 folding and/or dimer formation. In terms of biological role, involved in the first step of peroxisomal beta-oxidation by catalyzing the desaturation of fatty acid-derived side chains of ascaroside pheromones, which regulates development and behavior. Specifically, shortens ascarosides with a 9-carbon side chain (asc-C9) and, in association with acox-1.1, may contribute to the shortening of ascarosides with a 11-carbon side chain (asc-C11). May contribute to the production of indol-3-carbonyl(IC)-ascarosides in association with acox-1.1 and acox-3. The chain is Acyl-coenzyme A oxidase acox-1.4 from Caenorhabditis elegans.